The following is a 638-amino-acid chain: Cytoplasmic dynein 1 intermediate chain 2 (638 aa).

2 stretches are compositionally biased toward basic and acidic residues: residues 1 to 13 and 20 to 43; these read MSDKSELKAELER and QIREEKKRKEEERKKKETDQKKEA. 2 disordered regions span residues 1 to 135 and 154 to 209; these read MSDK…GRGP and VTYT…HELT. S2 bears the N-acetylserine mark. Residue S51 is modified to Diphosphoserine. S51 and S90 each carry phosphoserine. Residues 88-97 show a composition bias toward low complexity; sequence PSSKSVSTPS. T95 is modified (phosphothreonine). A phosphoserine mark is found at S97, S101, and S104. The segment at 133–165 is interaction with DYNLT1; it reads RGPIKLGMAKITQVDFPPREIVTYTKETQTPVT. Residues 190–209 show a composition bias toward basic and acidic residues; the sequence is EKILKKDEENDSKAPPHELT. WD repeat units follow at residues 277–326, 330–370, 379–420, 429–469, 474–519, and 568–607; these read SKHR…TTPE, HCQS…RTPV, AHTH…HPQD, SKAV…AGIS, GHQG…PLYS, and EGNPALNRVRWTHSGREIAVGDSEGQIVIYDVGEQIAVPR.

It belongs to the dynein intermediate chain family. In terms of assembly, homodimer. The cytoplasmic dynein 1 complex consists of two catalytic heavy chains (HCs) and a number of non-catalytic subunits presented by intermediate chains (ICs), light intermediate chains (LICs) and light chains (LCs); the composition seems to vary in respect to the IC, LIC and LC composition. The heavy chain homodimer serves as a scaffold for the probable homodimeric assembly of the respective non-catalytic subunits. The ICs and LICs bind directly to the HC dimer and the LCs assemble on the IC dimer. Interacts with DYNLT3. Interacts with DYNLT1. Interacts (dephosphorylated at Ser-90) with DCTN1. Interacts with BICD2. Interacts with SPEF2. Interacts with CFAP61. In terms of processing, the phosphorylation status of Ser-90 appears to be involved in dynactin-dependent target binding. Post-translationally, pyrophosphorylation by 5-diphosphoinositol pentakisphosphate (5-IP7) promotes interaction with DCTN1. Serine pyrophosphorylation is achieved by Mg(2+)-dependent, but enzyme independent transfer of a beta-phosphate from a inositol pyrophosphate to a pre-phosphorylated serine residue. As to expression, skeletal muscle, testis, kidney, brain, heart and spleen.

The protein resides in the cytoplasm. It localises to the cytoskeleton. Functionally, acts as one of several non-catalytic accessory components of the cytoplasmic dynein 1 complex that are thought to be involved in linking dynein to cargos and to adapter proteins that regulate dynein function. Cytoplasmic dynein 1 acts as a motor for the intracellular retrograde motility of vesicles and organelles along microtubules. The intermediate chains mediate the binding of dynein to dynactin via its 150 kDa component (p150-glued) DCTN1. Involved in membrane-transport, such as Golgi apparatus, late endosomes and lysosomes. The chain is Cytoplasmic dynein 1 intermediate chain 2 (Dync1i2) from Rattus norvegicus (Rat).